The following is a 59-amino-acid chain: Conotoxin ViVB (59 aa).

An N-terminal signal peptide occupies residues 1–22; it reads MRCVPVFIILLLLIPSAPSAAV. A propeptide spanning residues 23–46 is cleaved from the precursor; the sequence is QPKTEKDDVPLASFHDSAMRILSR. Gln-47 carries the pyrrolidone carboxylic acid modification. Val-58 is subject to Valine amide.

Contains 2 disulfide bonds that can be either 'C1-C3, C2-C4' or 'C1-C4, C2-C3', since these disulfide connectivities have been observed for conotoxins with cysteine framework V (for examples, see AC P0DQQ7 and AC P81755). As to expression, expressed by the venom duct.

It localises to the secreted. The sequence is that of Conotoxin ViVB from Conus virgo (Virgin cone).